Reading from the N-terminus, the 250-residue chain is 23S rRNA (guanine(2535)-N(1))-methyltransferase (250 aa).

It catalyses the reaction guanosine(2535) in 23S rRNA + S-adenosyl-L-methionine = N(1)-methylguanosine(2535) in 23S rRNA + S-adenosyl-L-homocysteine + H(+). In terms of biological role, specifically methylates the guanine-2535 in 23S ribosomal RNA. Confers resistance to antibiotic avilamycin, an orthosomycin antibiotic. This is 23S rRNA (guanine(2535)-N(1))-methyltransferase (aviRa) from Streptomyces viridochromogenes.